A 668-amino-acid chain; its full sequence is Biosynthetic arginine decarboxylase (668 aa).

At lysine 105 the chain carries N6-(pyridoxal phosphate)lysine. A substrate-binding site is contributed by 286–296 (LDVGGGLGVDY).

It belongs to the Orn/Lys/Arg decarboxylase class-II family. SpeA subfamily. It depends on Mg(2+) as a cofactor. Pyridoxal 5'-phosphate is required as a cofactor.

It catalyses the reaction L-arginine + H(+) = agmatine + CO2. Functionally, catalyzes the biosynthesis of agmatine from arginine. The chain is Biosynthetic arginine decarboxylase from Rhodopirellula baltica (strain DSM 10527 / NCIMB 13988 / SH1).